The primary structure comprises 320 residues: Mycothiol acetyltransferase (320 aa).

N-acetyltransferase domains lie at 16 to 141 (RQVR…RSLR) and 152 to 320 (LQIR…AALA). Glutamate 36 contributes to the 1D-myo-inositol 2-(L-cysteinylamino)-2-deoxy-alpha-D-glucopyranoside binding site. Acetyl-CoA is bound by residues 80–82 (LVV) and 88–93 (RRGIAT). Residues glutamate 179, lysine 229, and glutamate 239 each coordinate 1D-myo-inositol 2-(L-cysteinylamino)-2-deoxy-alpha-D-glucopyranoside. Acetyl-CoA-binding positions include 243–245 (LGV) and 250–256 (QGRGLGR). Tyrosine 284 provides a ligand contact to 1D-myo-inositol 2-(L-cysteinylamino)-2-deoxy-alpha-D-glucopyranoside. An acetyl-CoA-binding site is contributed by 289 to 294 (NIAAVR).

It belongs to the acetyltransferase family. MshD subfamily. In terms of assembly, monomer.

It carries out the reaction 1D-myo-inositol 2-(L-cysteinylamino)-2-deoxy-alpha-D-glucopyranoside + acetyl-CoA = mycothiol + CoA + H(+). In terms of biological role, catalyzes the transfer of acetyl from acetyl-CoA to desacetylmycothiol (Cys-GlcN-Ins) to form mycothiol. This is Mycothiol acetyltransferase from Mycobacterium marinum (strain ATCC BAA-535 / M).